The following is a 688-amino-acid chain: Potassium-transporting ATPase ATP-binding subunit (688 aa).

Helical transmembrane passes span 34–54, 62–82, 219–239, and 260–280; these read PVMFVVYLGSWLTTLIWLDIL, AMFTGSIALWLWFTVLFANMA, VALTILLVALTIVFLLATATL, and VLVALLVCLIPTTIGGLLSAI. The active-site 4-aspartylphosphate intermediate is Asp313. ATP contacts are provided by residues Asp350, Glu354, 383 to 390, and Lys401; that span reads FSAQTRMS. Mg(2+) contacts are provided by Asp524 and Asp528. The next 3 helical transmembrane spans lie at 594–614, 622–642, and 662–682; these read FAIIPAAFAATYPQLNALNIM, AILSAVIFNALVIVFLIPLAL, and IYGLGGLLVPFVGIKLIDLLL.

This sequence belongs to the cation transport ATPase (P-type) (TC 3.A.3) family. Type IA subfamily. The system is composed of three essential subunits: KdpA, KdpB and KdpC.

It is found in the cell inner membrane. It catalyses the reaction K(+)(out) + ATP + H2O = K(+)(in) + ADP + phosphate + H(+). Its function is as follows. Part of the high-affinity ATP-driven potassium transport (or Kdp) system, which catalyzes the hydrolysis of ATP coupled with the electrogenic transport of potassium into the cytoplasm. This subunit is responsible for energy coupling to the transport system and for the release of the potassium ions to the cytoplasm. In Yersinia pestis bv. Antiqua (strain Antiqua), this protein is Potassium-transporting ATPase ATP-binding subunit.